A 165-amino-acid polypeptide reads, in one-letter code: AP-3 complex subunit sigma (165 aa).

This sequence belongs to the adaptor complexes small subunit family. As to quaternary structure, adaptor protein complex 3 (AP-3) is a heterotetramer composed of 2 large adaptins (apl5 and apl6), a medium adaptin (apm3) and a small adaptin (aps3).

The protein localises to the golgi apparatus. The protein resides in the cytoplasmic vesicle membrane. In terms of biological role, part of the AP-3 complex, an adaptor-related complex which is not clathrin-associated. The complex is associated with the Golgi region as well as more peripheral structures. It facilitates the budding of vesicles from the Golgi membrane and may be directly involved in trafficking to the vacuole. This is AP-3 complex subunit sigma (aps3) from Schizosaccharomyces pombe (strain 972 / ATCC 24843) (Fission yeast).